A 77-amino-acid chain; its full sequence is Sec-independent protein translocase protein TatA (77 aa).

Residues 1-21 (MGSFSIWHWLVVLAIVVLVFG) traverse the membrane as a helical segment. A disordered region spans residues 40–77 (KEGMKGAEEENTQPPPSHQQVTGHSIKSEIEEKDQTKV). Over residues 65–77 (IKSEIEEKDQTKV) the composition is skewed to basic and acidic residues.

Belongs to the TatA/E family. As to quaternary structure, the Tat system comprises two distinct complexes: a TatABC complex, containing multiple copies of TatA, TatB and TatC subunits, and a separate TatA complex, containing only TatA subunits. Substrates initially bind to the TatABC complex, which probably triggers association of the separate TatA complex to form the active translocon.

It is found in the cell inner membrane. Part of the twin-arginine translocation (Tat) system that transports large folded proteins containing a characteristic twin-arginine motif in their signal peptide across membranes. TatA could form the protein-conducting channel of the Tat system. This chain is Sec-independent protein translocase protein TatA, found in Nitrosomonas eutropha (strain DSM 101675 / C91 / Nm57).